Here is a 434-residue protein sequence, read N- to C-terminus: Arrestin domain-containing protein 1 (434 aa).

The interval 295–345 (PGPGSSPGLLSPVVPSAPPQEEAEAVASGPHFSDPVSLSTKSHSQQQPLST) is disordered. Residues 330-342 (VSLSTKSHSQQQP) are compositionally biased toward polar residues. 2 consecutive short sequence motifs (PPxY motif) follow at residues 401–404 (PPEY) and 414–417 (PPSY).

This sequence belongs to the arrestin family. Interacts (via PPxY motifs) with ITCH (via WW domains); the interaction is direct and participates in the recruitment of the ubiquitin-protein ligase ITCH to the NOTCH1 receptor. Interacts with ARRB1 and ARRB2; the interaction is direct. Interacts with TSG101; may recruit TSG101 to the plasma membrane. Interacts (via PPxY motifs) with WWP2 (via WW domains); ubiquitinates ARRDC1. Interacts with SLC11A2; controls the incorporation of SLC11A2 into extracellular vesicles through an ubiquitination-dependent mechanism. Interacts with WWP1 (via WW domains). Interacts with NEDD4 (via WW domains). Interacts with PDCD6IP. Post-translationally, ubiquitinated. Ubiquitination by WWP2; promotes localization to extracellular microvesicles. Ubiquitinated by WWP1.

It localises to the cell membrane. Its function is as follows. Functions as an adapter recruiting ubiquitin-protein ligases to their specific substrates. Through an ubiquitination-dependent mechanism plays for instance a role in the incorporation of SLC11A2 into extracellular vesicles. More generally, plays a role in the extracellular transport of proteins between cells through the release in the extracellular space of microvesicles. By participating in the ITCH-mediated ubiquitination and subsequent degradation of NOTCH1, negatively regulates the NOTCH signaling pathway. This chain is Arrestin domain-containing protein 1, found in Rattus norvegicus (Rat).